The chain runs to 434 residues: 4-hydroxy-3-methylbut-2-en-1-yl diphosphate synthase (flavodoxin) (434 aa).

The segment covering 1–15 (MQSEAQSPRSSQICS) has biased composition (polar residues). A disordered region spans residues 1-24 (MQSEAQSPRSSQICSTEPVFGGHQ). [4Fe-4S] cluster-binding residues include cysteine 322, cysteine 325, cysteine 368, and glutamate 375.

This sequence belongs to the IspG family. The cofactor is [4Fe-4S] cluster.

The catalysed reaction is (2E)-4-hydroxy-3-methylbut-2-enyl diphosphate + oxidized [flavodoxin] + H2O + 2 H(+) = 2-C-methyl-D-erythritol 2,4-cyclic diphosphate + reduced [flavodoxin]. Its pathway is isoprenoid biosynthesis; isopentenyl diphosphate biosynthesis via DXP pathway; isopentenyl diphosphate from 1-deoxy-D-xylulose 5-phosphate: step 5/6. Its function is as follows. Converts 2C-methyl-D-erythritol 2,4-cyclodiphosphate (ME-2,4cPP) into 1-hydroxy-2-methyl-2-(E)-butenyl 4-diphosphate. The sequence is that of 4-hydroxy-3-methylbut-2-en-1-yl diphosphate synthase (flavodoxin) from Burkholderia ambifaria (strain MC40-6).